The chain runs to 697 residues: MFS antiporter QDR3 (697 aa).

Over 1-141 the chain is Cytoplasmic; it reads MSHSPNLSPQ…ARDYPNKIKY (141 aa). The tract at residues 38–109 is disordered; it reads HPIGHHGREQ…KPTSTSIKTN (72 aa). Low complexity-rich tracts occupy residues 53 to 69 and 85 to 99; these read NTTK…HTTT and DLSS…YLSQ. Residues 142-162 traverse the membrane as a helical segment; the sequence is LIVFIIAFASLAGPFGTSVML. Residues 163 to 180 are Extracellular-facing; sequence PAIDDIVNDLNTNVSTVN. Asn175 and Asn180 each carry an N-linked (GlcNAc...) asparagine glycan. A helical transmembrane segment spans residues 181 to 201; it reads VSVGIYLLSLGIFPLWWSSFS. Over 202 to 215 the chain is Cytoplasmic; it reads ERFGRRSVYMVSFT. Residues 216–236 traverse the membrane as a helical segment; the sequence is LFVAFSIGTALSPNIAALIVL. The Extracellular segment spans residues 237–240; sequence RVLQ. The chain crosses the membrane as a helical span at residues 241 to 261; the sequence is GGSSASVQAVGAGTIADLFIP. At 262-268 the chain is on the cytoplasmic side; the sequence is QERGQAM. A helical transmembrane segment spans residues 269–289; sequence GLYYLGPLAGPFLAPILGGAV. The Extracellular segment spans residues 290–296; it reads SQAWGWR. Residues 297–317 form a helical membrane-spanning segment; the sequence is ATQWLLMIISACSFVLITFFL. The Cytoplasmic portion of the chain corresponds to 318-485; sequence PETLRRVDTI…SIILLKHPPV (168 aa). The segment at 338-367 is disordered; that stretch reads DNNGSQNEKIHDDFAGADNSSVHDIDGNPI. The chain crosses the membrane as a helical span at residues 486 to 506; that stretch reads VLVISFSAISFAAIYFFNMAI. The Extracellular portion of the chain corresponds to 507–519; that stretch reads SYEYARSPYNFSS. A glycan (N-linked (GlcNAc...) asparagine) is linked at Asn516. A helical membrane pass occupies residues 520-540; that stretch reads VILGLMYIPNSVTYFMASIIG. The Cytoplasmic portion of the chain corresponds to 541–565; sequence GKWNDRLLNRYAQKHGELVPESRLS. The helical transmembrane segment at 566 to 586 threads the bilayer; it reads WNIVVAIILYPMACLIFGWTI. The Extracellular portion of the chain corresponds to 587–590; the sequence is KYRE. Residues 591-611 traverse the membrane as a helical segment; it reads FWVIPLIGTALFGFASMLVIG. The Cytoplasmic portion of the chain corresponds to 612–626; that stretch reads ATVTYLVDSLPGKGA. Residues 627-647 traverse the membrane as a helical segment; it reads TGVALNNLIRQILAAIATFIV. Residues 648-653 lie on the Extracellular side of the membrane; the sequence is EPLLRA. Residues 654–674 traverse the membrane as a helical segment; it reads IGAGVLFSIIAGILLVSSLVL. Over 675 to 697 the chain is Cytoplasmic; the sequence is LYLKKRGAFFREHYDVMDLYAKL.

It belongs to the major facilitator superfamily. CAR1 family.

The protein localises to the cell membrane. Functionally, MFS antiporter that does not display functional linkage as drug transporter and performs functions that significantly affect biofilm development and virulence. No substrate for transport has been identified yet, but plays an important role in the growth in the host. The chain is MFS antiporter QDR3 (QDR3) from Candida albicans (strain SC5314 / ATCC MYA-2876) (Yeast).